We begin with the raw amino-acid sequence, 82 residues long: Putative membrane protein insertion efficiency factor (82 aa).

The protein belongs to the UPF0161 family.

It localises to the cell inner membrane. Functionally, could be involved in insertion of integral membrane proteins into the membrane. The sequence is that of Putative membrane protein insertion efficiency factor from Thermus thermophilus (strain ATCC BAA-163 / DSM 7039 / HB27).